The sequence spans 33 residues: Mu/omega-theraphotoxin-Tap2a (33 aa).

Disulfide bonds link Cys-2–Cys-17, Cys-9–Cys-22, and Cys-16–Cys-29.

The protein belongs to the neurotoxin 10 (Hwtx-1) family. 59 (Tltx) subfamily. In terms of tissue distribution, expressed by the venom gland.

The protein resides in the secreted. Its function is as follows. Gating-modifier toxin that inhibits both sodium (Nav) and calcium (Cav3) channels by inducing hyperpolarizing shift in voltage-dependence of activation and steady state inactivation. Inhibits Nav1.1/SCN1A, Nav1.2/SCN2A, Nav1.6/SCN6A, Nav1.7/SCN9A and Cav3.1/CACNA1G sodium and calcium channels at nanomolar concentrations (IC(50)=169-621 nM). Surprisingly, selectively slows fast inactivation of Nav1.3/SCN3A. Also shows moderate inhibition of Nav1.3/SCN3A sodium channels (IC(50)=1216 nM). The protein is Mu/omega-theraphotoxin-Tap2a of Theraphosa apophysis (Goliath pinkfoot tarantula).